The sequence spans 107 residues: Large ribosomal subunit protein P2 (107 aa).

The disordered stretch occupies residues 86–107 (PAAAAAEAEEEDDDDMGFGLFD). Positions 92–101 (EAEEEDDDDM) are enriched in acidic residues.

The protein belongs to the eukaryotic ribosomal protein P1/P2 family. In terms of assembly, P1 and P2 exist as dimers at the large ribosomal subunit. Phosphorylated.

Functionally, plays an important role in the elongation step of protein synthesis. The sequence is that of Large ribosomal subunit protein P2 from Trypanosoma brucei brucei.